The following is a 1048-amino-acid chain: Malignant fibrous histiocytoma-amplified sequence 1 homolog (1048 aa).

N-acetylalanine is present on Ala-2. LRR repeat units lie at residues 60–81 (DIEV…LGSA), 84–105 (SLRV…VAEL), 108–129 (HLTE…VVSA), 132–153 (ELRK…LGAL), 155–176 (HLEE…FSCL), 178–199 (HLRT…LLQL), 201–222 (ALEE…ISAL), 224–246 (ALKI…CELA), 247–268 (SLES…FSRL), 270–292 (RLKM…LPLA), 293–314 (GLEE…IAGL), 316–337 (RLLT…IVEL), and 339–360 (GLEE…FGQL). The segment at 60-360 (DIEVLNLGNN…AVLPDNFGQL (301 aa)) is required for interaction with PJA2. Residues 60-645 (DIEVLNLGNN…DKLLSVAEHR (586 aa)) form a required for interaction with PPP2R2A region. The Roc domain occupies 399 to 645 (QPAVQPRLKL…DKLLSVAEHR (247 aa)). Residue Lys-597 is modified to N6-acetyllysine.

In terms of assembly, interacts with RAF1. Interacts with HSPD1. Interacts with PPP2CA; retains PPP2CA into the cytoplasm and excludes it from the nucleus. Interacts with PPP2R2A; the interaction is direct. Interacts with PJA2. Post-translationally, ubiquitinated. Ubiquitination by PJA2 does not lead MFHAS1 to proteasomal degradation but positively regulates its function in polarization of macrophages.

Its subcellular location is the cytoplasm. In terms of biological role, probable GTP-binding protein. Functions in innate immunity and more specifically the inflammatory response as a regulator of the Toll-like receptor TLR2 and TLR4 signaling pathways. Negatively regulates the part of the TLR4 signaling pathway that leads to the activation of the transcription factor AP-1. By retaining the phosphatase complex PP2A into the cytoplasm, prevents the dephosphorylation of the AP-1 subunit JUN which is required for proper activation of the transcription factor. Both inhibits and activates the TLR2-dependent signaling pathway. Positively regulates the TLR2 signaling pathway to activate specifically the downstream p38 and JNK MAP kinases and promote the polarization of macrophages toward the pro-inflammatory M1 phenotype. It may also play a role in the regulation of inflammation induced by high glucose through the PKB/AKT signaling pathway. Also involved in erythrocyte differentiation through activation of the ERK1/ERK2 signaling pathway. This chain is Malignant fibrous histiocytoma-amplified sequence 1 homolog, found in Mus musculus (Mouse).